Consider the following 550-residue polypeptide: Carboxypeptidase Y homolog A (550 aa).

A signal peptide spans 1–18 (MKSLVLGLLVGSAIASGP). Positions 19–131 (LQHVLHAPPD…KLSQYDLRIK (113 aa)) are excised as a propeptide. The tract at residues 20–39 (QHVLHAPPDPEPKPEPEPQV) is disordered. Disulfide bonds link cysteine 185–cysteine 424, cysteine 319–cysteine 333, cysteine 343–cysteine 366, cysteine 350–cysteine 359, and cysteine 388–cysteine 394. N-linked (GlcNAc...) asparagine glycans are attached at residues asparagine 203 and asparagine 216. Serine 272 is a catalytic residue. The N-linked (GlcNAc...) asparagine glycan is linked to asparagine 289. Asparagine 387 carries N-linked (GlcNAc...) asparagine glycosylation. The active site involves aspartate 463. Residues asparagine 493 and asparagine 514 are each glycosylated (N-linked (GlcNAc...) asparagine). The active site involves histidine 525.

The protein belongs to the peptidase S10 family.

It is found in the vacuole. The enzyme catalyses Release of a C-terminal amino acid with broad specificity.. Vacuolar carboxypeptidase involved in degradation of small peptides. Digests preferentially peptides containing an aliphatic or hydrophobic residue in P1' position, as well as methionine, leucine or phenylalanine in P1 position of ester substrate. The protein is Carboxypeptidase Y homolog A (CPYA) of Paracoccidioides brasiliensis (strain Pb18).